Reading from the N-terminus, the 58-residue chain is Gigasin-4 (58 aa).

Component of the organic matrix of calcified shell layers.

The protein is Gigasin-4 of Magallana gigas (Pacific oyster).